A 339-amino-acid chain; its full sequence is Ribosomal RNA small subunit methyltransferase H (339 aa).

Residues 52–54 (GGH), D71, F98, D130, and Q137 each bind S-adenosyl-L-methionine.

This sequence belongs to the methyltransferase superfamily. RsmH family.

The protein localises to the cytoplasm. It catalyses the reaction cytidine(1402) in 16S rRNA + S-adenosyl-L-methionine = N(4)-methylcytidine(1402) in 16S rRNA + S-adenosyl-L-homocysteine + H(+). In terms of biological role, specifically methylates the N4 position of cytidine in position 1402 (C1402) of 16S rRNA. The polypeptide is Ribosomal RNA small subunit methyltransferase H (Corynebacterium diphtheriae (strain ATCC 700971 / NCTC 13129 / Biotype gravis)).